Here is a 408-residue protein sequence, read N- to C-terminus: MKQESSFLAKLANGSLVLQILVGIIAGVALASFSHEWAKQVAFLGSLFVGALKAIAPILVFILVASSIANQKKNTQTNMRPIVVLYLLGTFAAALTAVILSMMFPTTLVLAAGVEGTSPPQGISEVISTLLFKLVDNPVNALMTGNYIGILAWGVGLGLALHHSSDSTKQVFADVSHGISQMVHFIIRLAPIGIFGLVAATFAETGFAAIAGYAQLLAVLLGAMAFIALIINPLIVYVKIKRNPYPLVIRCLRESGMTAFFTRSSAANIPVNMALCEKLKLHEDTYAVSIPLGATINMGGAAITITVLTLAAAHTLGIQVDLLTALLLSVVAAISACGASGVAGGSLLLIPLACSLFGISNDVAMQVVAVGFIIGVIQDAAETALNSSTDVIFTAAACEAAENKAKLG.

The next 9 membrane-spanning stretches (helical) occupy residues 11–31 (LANG…VALA), 43–63 (FLGS…VFIL), 82–102 (IVVL…ILSM), 141–161 (ALMT…GLAL), 192–212 (IGIF…AIAG), 216–236 (LLAV…PLIV), 290–310 (IPLG…VLTL), 316–336 (LGIQ…AISA), and 363–383 (VAMQ…AAET).

Belongs to the dicarboxylate/amino acid:cation symporter (DAACS) (TC 2.A.23) family.

The protein localises to the cell inner membrane. The enzyme catalyses L-serine(in) + Na(+)(in) = L-serine(out) + Na(+)(out). The catalysed reaction is L-threonine(in) + Na(+)(in) = L-threonine(out) + Na(+)(out). Functionally, involved in the import of serine and threonine into the cell, with the concomitant import of sodium (symport system). This chain is Serine/threonine transporter SstT, found in Shewanella oneidensis (strain ATCC 700550 / JCM 31522 / CIP 106686 / LMG 19005 / NCIMB 14063 / MR-1).